A 405-amino-acid chain; its full sequence is Phosphoglycerate kinase (405 aa).

Substrate is bound by residues 21 to 23, arginine 36, 59 to 62, arginine 119, and arginine 161; these read DFN and HLGR. ATP contacts are provided by residues lysine 212, glycine 301, glutamate 332, and 361–364; that span reads GGDS.

It belongs to the phosphoglycerate kinase family. Monomer.

The protein resides in the cytoplasm. It catalyses the reaction (2R)-3-phosphoglycerate + ATP = (2R)-3-phospho-glyceroyl phosphate + ADP. It functions in the pathway carbohydrate degradation; glycolysis; pyruvate from D-glyceraldehyde 3-phosphate: step 2/5. The protein is Phosphoglycerate kinase of Leuconostoc citreum (strain KM20).